Consider the following 457-residue polypeptide: tRNA modification GTPase MnmE (457 aa).

The (6S)-5-formyl-5,6,7,8-tetrahydrofolate site is built by arginine 24, glutamate 81, and lysine 121. Positions 218-380 constitute a TrmE-type G domain; that stretch reads GIKIVITGKP…LLKYLTKIIS (163 aa). K(+) is bound at residue asparagine 228. Residues 228-233, 247-253, 272-275, and 338-341 contribute to the GTP site; these read NVGKSS, TNIAGTT, DTAG, and NKAD. Position 232 (serine 232) interacts with Mg(2+). Residues threonine 247, isoleucine 249, and threonine 252 each coordinate K(+). Residue threonine 253 coordinates Mg(2+). Residue lysine 457 participates in (6S)-5-formyl-5,6,7,8-tetrahydrofolate binding.

It belongs to the TRAFAC class TrmE-Era-EngA-EngB-Septin-like GTPase superfamily. TrmE GTPase family. In terms of assembly, homodimer. Heterotetramer of two MnmE and two MnmG subunits. K(+) is required as a cofactor.

The protein localises to the cytoplasm. Its function is as follows. Exhibits a very high intrinsic GTPase hydrolysis rate. Involved in the addition of a carboxymethylaminomethyl (cmnm) group at the wobble position (U34) of certain tRNAs, forming tRNA-cmnm(5)s(2)U34. The sequence is that of tRNA modification GTPase MnmE from Baumannia cicadellinicola subsp. Homalodisca coagulata.